Here is a 155-residue protein sequence, read N- to C-terminus: Molybdopterin synthase catalytic subunit 2 (155 aa).

Residues 101-102 (HR), lysine 117, and 124-126 (KKE) contribute to the substrate site.

The protein belongs to the MoaE family. MOCS2B subfamily. Heterotetramer; composed of 2 small (MOCS2A) and 2 large (MOCS2B) subunits.

It localises to the cytoplasm. It carries out the reaction 2 [molybdopterin-synthase sulfur-carrier protein]-C-terminal-Gly-aminoethanethioate + cyclic pyranopterin phosphate + H2O = molybdopterin + 2 [molybdopterin-synthase sulfur-carrier protein]-C-terminal Gly-Gly + 2 H(+). Its pathway is cofactor biosynthesis; molybdopterin biosynthesis. In terms of biological role, catalytic subunit of the molybdopterin synthase complex, a complex that catalyzes the conversion of precursor Z into molybdopterin. Acts by mediating the incorporation of 2 sulfur atoms from thiocarboxylated MOCS2A into precursor Z to generate a dithiolene group. The polypeptide is Molybdopterin synthase catalytic subunit 2 (Aedes aegypti (Yellowfever mosquito)).